The primary structure comprises 445 residues: Probable glycine dehydrogenase (decarboxylating) subunit 1 (445 aa).

It belongs to the GcvP family. N-terminal subunit subfamily. The glycine cleavage system is composed of four proteins: P, T, L and H. In this organism, the P 'protein' is a heterodimer of two subunits.

It carries out the reaction N(6)-[(R)-lipoyl]-L-lysyl-[glycine-cleavage complex H protein] + glycine + H(+) = N(6)-[(R)-S(8)-aminomethyldihydrolipoyl]-L-lysyl-[glycine-cleavage complex H protein] + CO2. Its function is as follows. The glycine cleavage system catalyzes the degradation of glycine. The P protein binds the alpha-amino group of glycine through its pyridoxal phosphate cofactor; CO(2) is released and the remaining methylamine moiety is then transferred to the lipoamide cofactor of the H protein. This Citrifermentans bemidjiense (strain ATCC BAA-1014 / DSM 16622 / JCM 12645 / Bem) (Geobacter bemidjiensis) protein is Probable glycine dehydrogenase (decarboxylating) subunit 1.